A 95-amino-acid chain; its full sequence is Aspartyl/glutamyl-tRNA(Asn/Gln) amidotransferase subunit C (95 aa).

It belongs to the GatC family. Heterotrimer of A, B and C subunits.

The catalysed reaction is L-glutamyl-tRNA(Gln) + L-glutamine + ATP + H2O = L-glutaminyl-tRNA(Gln) + L-glutamate + ADP + phosphate + H(+). It carries out the reaction L-aspartyl-tRNA(Asn) + L-glutamine + ATP + H2O = L-asparaginyl-tRNA(Asn) + L-glutamate + ADP + phosphate + 2 H(+). Functionally, allows the formation of correctly charged Asn-tRNA(Asn) or Gln-tRNA(Gln) through the transamidation of misacylated Asp-tRNA(Asn) or Glu-tRNA(Gln) in organisms which lack either or both of asparaginyl-tRNA or glutaminyl-tRNA synthetases. The reaction takes place in the presence of glutamine and ATP through an activated phospho-Asp-tRNA(Asn) or phospho-Glu-tRNA(Gln). The polypeptide is Aspartyl/glutamyl-tRNA(Asn/Gln) amidotransferase subunit C (Brucella abortus (strain S19)).